The sequence spans 320 residues: Ribonuclease Z (320 aa).

Zn(2+) contacts are provided by His62, His64, Asp66, His67, His139, Asp210, and His268. Asp66 (proton acceptor) is an active-site residue.

Belongs to the RNase Z family. As to quaternary structure, homodimer. Zn(2+) serves as cofactor.

It carries out the reaction Endonucleolytic cleavage of RNA, removing extra 3' nucleotides from tRNA precursor, generating 3' termini of tRNAs. A 3'-hydroxy group is left at the tRNA terminus and a 5'-phosphoryl group is left at the trailer molecule.. Its function is as follows. Zinc phosphodiesterase, which displays some tRNA 3'-processing endonuclease activity. Probably involved in tRNA maturation, by removing a 3'-trailer from precursor tRNA. This Cyanothece sp. (strain PCC 7425 / ATCC 29141) protein is Ribonuclease Z.